We begin with the raw amino-acid sequence, 381 residues long: tRNA pseudouridine synthase D (381 aa).

The Nucleophile role is filled by aspartate 81. Residues 160 to 335 (GMPNYFGSQR…TLGSRRFFWV (176 aa)) enclose the TRUD domain.

Belongs to the pseudouridine synthase TruD family.

It carries out the reaction uridine(13) in tRNA = pseudouridine(13) in tRNA. In terms of biological role, responsible for synthesis of pseudouridine from uracil-13 in transfer RNAs. The sequence is that of tRNA pseudouridine synthase D from Helicobacter pylori (strain HPAG1).